We begin with the raw amino-acid sequence, 148 residues long: uncharacterized protein (148 aa).

One can recognise an HTH asnC-type domain in the interval 4-65; sequence MDKVDLQLIK…IPNLEKLNYM (62 aa). Residues 23 to 42 constitute a DNA-binding region (H-T-H motif); that stretch reads YRELAEMLGTTRQRVARKVD.

This is an uncharacterized protein from Pyrococcus furiosus (strain ATCC 43587 / DSM 3638 / JCM 8422 / Vc1).